The sequence spans 374 residues: RNA binding protein fox-1 homolog 3 (374 aa).

Residues 1 to 29 show a composition bias toward pro residues; the sequence is MAQPYPPAQYPPPPQNGIPAEYAPPPPHP. The tract at residues 1–105 is disordered; that stretch reads MAQPYPPAQY…QQPKRLHVSN (105 aa). Residues 49-74 show a composition bias toward polar residues; that stretch reads TPAQTHPEQPGTEASTQPIAGTQTVP. Residues 99-175 form the RRM domain; it reads KRLHVSNIPF…RKIEVNNATA (77 aa). Arginine 223 bears the Asymmetric dimethylarginine; alternate mark. Arginine 223 is subject to Omega-N-methylarginine; alternate. Position 319 is an asymmetric dimethylarginine (arginine 319).

In terms of processing, phosphorylated. As to expression, widely expressed in brain, including in cerebral cortex, hippocampus, thalamus, caudate/putamen, cerebellum, as well as in the spinal cord (at protein level). Not expressed in all neuronal cells within a region, in cerebellum, expression is absent in Purkinje cells (at protein level). Expressed in the retina in the ganglion cells and some cells in the inner nuclear layer, but absent from the photoreceptor cells and most cells in the inner nuclear layer (at protein level).

The protein localises to the nucleus. It localises to the cytoplasm. Functionally, pre-mRNA alternative splicing regulator. Regulates alternative splicing of RBFOX2 to enhance the production of mRNA species that are targeted for nonsense-mediated decay (NMD). This chain is RNA binding protein fox-1 homolog 3 (Rbfox3), found in Mus musculus (Mouse).